We begin with the raw amino-acid sequence, 98 residues long: Integration host factor subunit beta (98 aa).

Belongs to the bacterial histone-like protein family. In terms of assembly, heterodimer of an alpha and a beta chain.

In terms of biological role, this protein is one of the two subunits of integration host factor, a specific DNA-binding protein that functions in genetic recombination as well as in transcriptional and translational control. In Gluconacetobacter diazotrophicus (strain ATCC 49037 / DSM 5601 / CCUG 37298 / CIP 103539 / LMG 7603 / PAl5), this protein is Integration host factor subunit beta.